We begin with the raw amino-acid sequence, 800 residues long: Mitochondrial intermediate peptidase (800 aa).

The N-terminal 23 residues, 1–23, are a transit peptide targeting the mitochondrion; sequence MAGHMLMPLRRRPWTCRACLQRL. The span at 27–41 shows a compositional bias: polar residues; sequence RRSLETAASPSSQSD. The disordered stretch occupies residues 27-59; sequence RRSLETAASPSSQSDVYDYAPTNHSTQKKSNDE. Histidine 563 lines the Zn(2+) pocket. Glutamate 564 is a catalytic residue. Zn(2+) is bound by residues histidine 567 and histidine 570.

This sequence belongs to the peptidase M3 family. It depends on Zn(2+) as a cofactor.

It localises to the mitochondrion matrix. It carries out the reaction Release of an N-terminal octapeptide as second stage of processing of some proteins imported into the mitochondrion.. In terms of biological role, cleaves proteins, imported into the mitochondrion, to their mature size. While most mitochondrial precursor proteins are processed to the mature form in one step by mitochondrial processing peptidase (MPP), the sequential cleavage by MIP of an octapeptide after initial processing by MPP is a required step for a subgroup of nuclear-encoded precursor proteins destined for the matrix or the inner membrane. The chain is Mitochondrial intermediate peptidase (oct1) from Aspergillus oryzae (strain ATCC 42149 / RIB 40) (Yellow koji mold).